The primary structure comprises 251 residues: 3-deoxy-manno-octulosonate cytidylyltransferase (251 aa).

Belongs to the KdsB family.

The protein localises to the cytoplasm. The enzyme catalyses 3-deoxy-alpha-D-manno-oct-2-ulosonate + CTP = CMP-3-deoxy-beta-D-manno-octulosonate + diphosphate. Its pathway is nucleotide-sugar biosynthesis; CMP-3-deoxy-D-manno-octulosonate biosynthesis; CMP-3-deoxy-D-manno-octulosonate from 3-deoxy-D-manno-octulosonate and CTP: step 1/1. It functions in the pathway bacterial outer membrane biogenesis; lipopolysaccharide biosynthesis. Functionally, activates KDO (a required 8-carbon sugar) for incorporation into bacterial lipopolysaccharide in Gram-negative bacteria. This chain is 3-deoxy-manno-octulosonate cytidylyltransferase, found in Geotalea uraniireducens (strain Rf4) (Geobacter uraniireducens).